The sequence spans 100 residues: Urease subunit gamma (100 aa).

This sequence belongs to the urease gamma subunit family. Heterotrimer of UreA (gamma), UreB (beta) and UreC (alpha) subunits. Three heterotrimers associate to form the active enzyme.

The protein localises to the cytoplasm. The enzyme catalyses urea + 2 H2O + H(+) = hydrogencarbonate + 2 NH4(+). It functions in the pathway nitrogen metabolism; urea degradation; CO(2) and NH(3) from urea (urease route): step 1/1. In terms of biological role, ureolysis may allow urea to be employed as a nitrogen source for growth and produces ammonia which may protect from killing at low pH. This chain is Urease subunit gamma, found in Streptococcus salivarius (strain 57.I).